A 186-amino-acid polypeptide reads, in one-letter code: ADP-ribosylation factor-like protein 8A (186 aa).

The segment at residues 1–19 (MLALFNKLLDWFRALFWKE) is an intramembrane region (note=Mediates targeting to membranes). GTP-binding positions include 29-35 (QYSGKTT), 71-75 (DIGGQ), and 130-133 (NKRD).

Belongs to the small GTPase superfamily. Arf family.

It localises to the late endosome membrane. Its subcellular location is the lysosome membrane. It is found in the cytoplasm. The protein localises to the cytoskeleton. The protein resides in the spindle. It localises to the cell projection. Its subcellular location is the axon. It is found in the synapse. Plays a role in lysosome motility. In neurons, mediates the anterograde axonal long-range transport of presynaptic lysosome-related vesicles required for presynaptic biogenesis and synaptic function. May play a role in chromosome segregation. This chain is ADP-ribosylation factor-like protein 8A (ARL8A), found in Gallus gallus (Chicken).